Consider the following 430-residue polypeptide: Adenylosuccinate synthetase (430 aa).

GTP is bound by residues 13–19 and 41–43; these read GDEGKGK and GHT. The active-site Proton acceptor is the D14. Residues D14 and G41 each contribute to the Mg(2+) site. IMP contacts are provided by residues 14 to 17, 39 to 42, T130, R144, Q225, T240, and R304; these read DEGK and NAGH. Catalysis depends on H42, which acts as the Proton donor. 300-306 contacts substrate; the sequence is STTGRAR. GTP contacts are provided by residues R306, 332–334, and 414–416; these read KLD and STG.

It belongs to the adenylosuccinate synthetase family. Homodimer. The cofactor is Mg(2+).

It localises to the cytoplasm. The catalysed reaction is IMP + L-aspartate + GTP = N(6)-(1,2-dicarboxyethyl)-AMP + GDP + phosphate + 2 H(+). It participates in purine metabolism; AMP biosynthesis via de novo pathway; AMP from IMP: step 1/2. In terms of biological role, plays an important role in the de novo pathway of purine nucleotide biosynthesis. Catalyzes the first committed step in the biosynthesis of AMP from IMP. This Pseudomonas entomophila (strain L48) protein is Adenylosuccinate synthetase.